Consider the following 351-residue polypeptide: MTLRLLEDWCRGMDMNPRKALLIAGISQSCSVAEIEEALQAGLAPLGEYRLLGRMFRRDENRKVALVGLTAETSHALVPKEIPGKGGIWRVIFKPPDSDNTFLSRLNEFLAGEGMTVGELTRALAHENGSLDLEQGMIPEMWAPMLAQALEALQPALQCLKYKKLRVFSGREPPEPGEEEFGRWMFHTTQMIKAWQVPDVEKRRRLLESLRGPALDVIRVLKINNPLITVDECLQALEEVFGVTDNPRELQVKYLTTYQKDEEKLSAYVLRLEPLLQKLVQRGAIERDAVNQARLDQVIAGAVHKTIRRELNLPEDGPAPGFLQLLVLIKDYEAAEEEEALLQEVLEGHFT.

The LIR signature appears at 49–52; that stretch reads YRLL. Residues 120 to 127 are BH3-like; the sequence is LTRALAHE. Residues 202 to 205 form an RASSF1-binding region; that stretch reads KRRR.

It belongs to the PNMA family. Homodimer. Under normal circumstances, held in an inactive conformation by an intramolecular interaction. Interacts with BAX. Binding to RASSF1 isoform A (RASSF1A) relieves this inhibitory interaction and allows further binding to BAX. Also binds to BCL2 and BCLX. Recruited to the TNFRSF1A and TNFRSF10A complexes in response to their respective cognate ligand, after internalization. Interacts with TRIM39. Interacts with RASSF6. Interacts with ATG8 proteins MAP1LC3A, MAP1LC3B and MAP1LC3C. Does not interact with ATG8 proteins GABARAPL1, GABARAPL2 and GABARAP. Interacts with SQSTM1; promoting dissociation of SQSTM1 inclusion bodies that sequester KEAP1. In terms of processing, ubiquitinated and degraded during mitotic exit by APC/C-Cdh1, this modification is inhibited by TRIM39.

It localises to the cytoplasm. The protein localises to the cytosol. Its subcellular location is the mitochondrion outer membrane. It is found in the extracellular vesicle membrane. In terms of biological role, retrotransposon-derived protein that forms virion-like capsids. Acts as an effector of BAX during apoptosis: enriched at outer mitochondria membrane and associates with BAX upon induction of apoptosis, facilitating BAX-dependent mitochondrial outer membrane permeabilization and apoptosis. Required for death receptor-dependent apoptosis. When associated with RASSF1, promotes BAX conformational change and translocation to mitochondrial membranes in response to TNF and TNFSF10 stimulation. Also promotes autophagy: promotes phagophore closure via association with ATG8 proteins. Acts as an inhibitor of the NFE2L2/NRF2 pathway via interaction with SQSTM1: interaction promotes dissociation of SQSTM1 inclusion bodies that sequester KEAP1, relieving inactivation of the BCR(KEAP1) complex. This is Modulator of apoptosis 1 from Macaca fascicularis (Crab-eating macaque).